Consider the following 82-residue polypeptide: DNA gyrase inhibitor YacG (82 aa).

Zn(2+) is bound by residues Cys9, Cys12, Cys27, and Cys31. Residues Ile44–Glu82 are disordered. The span at Arg72–Glu82 shows a compositional bias: basic and acidic residues.

This sequence belongs to the DNA gyrase inhibitor YacG family. In terms of assembly, interacts with GyrB. It depends on Zn(2+) as a cofactor.

Its function is as follows. Inhibits all the catalytic activities of DNA gyrase by preventing its interaction with DNA. Acts by binding directly to the C-terminal domain of GyrB, which probably disrupts DNA binding by the gyrase. The chain is DNA gyrase inhibitor YacG from Rhodopirellula baltica (strain DSM 10527 / NCIMB 13988 / SH1).